A 101-amino-acid chain; its full sequence is Large ribosomal subunit protein uL23 (101 aa).

Belongs to the universal ribosomal protein uL23 family. Part of the 50S ribosomal subunit. Contacts protein L29, and trigger factor when it is bound to the ribosome.

One of the early assembly proteins it binds 23S rRNA. One of the proteins that surrounds the polypeptide exit tunnel on the outside of the ribosome. Forms the main docking site for trigger factor binding to the ribosome. In Kocuria rhizophila (strain ATCC 9341 / DSM 348 / NBRC 103217 / DC2201), this protein is Large ribosomal subunit protein uL23.